A 476-amino-acid polypeptide reads, in one-letter code: Beta-xylosidase (476 aa).

The active-site Proton donor is Glu188. The active-site Nucleophile is Glu292. Residue Asn468 is glycosylated (N-linked (GlcNAc...) asparagine).

It belongs to the glycosyl hydrolase 5 (cellulase A) family.

It localises to the secreted. The enzyme catalyses Hydrolysis of (1-&gt;4)-beta-D-xylans, to remove successive D-xylose residues from the non-reducing termini.. Catalyzes the hydrolysis of xylo-oligomers to xylose units and plays an important role in xylan degradation. Can also perform the transglycosylation of xylose and alcohol. Has no endoglucanase activity. This chain is Beta-xylosidase, found in Phanerodontia chrysosporium (White-rot fungus).